A 206-amino-acid polypeptide reads, in one-letter code: Imidazole glycerol phosphate synthase subunit HisH (206 aa).

The region spanning 5–206 (SVVVLDYGSG…AVLRNWIERL (202 aa)) is the Glutamine amidotransferase type-1 domain. The active-site Nucleophile is the cysteine 83. Catalysis depends on residues histidine 187 and glutamate 189.

In terms of assembly, heterodimer of HisH and HisF.

The protein localises to the cytoplasm. It carries out the reaction 5-[(5-phospho-1-deoxy-D-ribulos-1-ylimino)methylamino]-1-(5-phospho-beta-D-ribosyl)imidazole-4-carboxamide + L-glutamine = D-erythro-1-(imidazol-4-yl)glycerol 3-phosphate + 5-amino-1-(5-phospho-beta-D-ribosyl)imidazole-4-carboxamide + L-glutamate + H(+). It catalyses the reaction L-glutamine + H2O = L-glutamate + NH4(+). Its pathway is amino-acid biosynthesis; L-histidine biosynthesis; L-histidine from 5-phospho-alpha-D-ribose 1-diphosphate: step 5/9. In terms of biological role, IGPS catalyzes the conversion of PRFAR and glutamine to IGP, AICAR and glutamate. The HisH subunit catalyzes the hydrolysis of glutamine to glutamate and ammonia as part of the synthesis of IGP and AICAR. The resulting ammonia molecule is channeled to the active site of HisF. The chain is Imidazole glycerol phosphate synthase subunit HisH from Mycolicibacterium paratuberculosis (strain ATCC BAA-968 / K-10) (Mycobacterium paratuberculosis).